We begin with the raw amino-acid sequence, 101 residues long: MKLAIIGGYNFERHSKSMGKLKNIELRFHDGVPKKNNKKVLENLIKDTDCVIIVQMVCSHSSMWDAKDVARKYNKKIYYSQAKGLASVLTMIEKEHGIRTA.

Belongs to the UPF0751 family.

The polypeptide is UPF0751 protein DSY3086 (Desulfitobacterium hafniense (strain Y51)).